Reading from the N-terminus, the 174-residue chain is uncharacterized protein (174 aa).

Positions 137 to 174 (TNVTLGDDTPKSYDAPVSAIPPPATATTANATGVKPLE) are disordered.

This is an uncharacterized protein from Acanthamoeba polyphaga (Amoeba).